Consider the following 176-residue polypeptide: Ribosome maturation factor RimM (176 aa).

One can recognise a PRC barrel domain in the interval 93-170 (DGEYYHADLI…ELPTEIEGDT (78 aa)).

It belongs to the RimM family. In terms of assembly, binds ribosomal protein uS19.

It is found in the cytoplasm. Functionally, an accessory protein needed during the final step in the assembly of 30S ribosomal subunit, possibly for assembly of the head region. Essential for efficient processing of 16S rRNA. May be needed both before and after RbfA during the maturation of 16S rRNA. It has affinity for free ribosomal 30S subunits but not for 70S ribosomes. This is Ribosome maturation factor RimM from Rhodopseudomonas palustris (strain BisB5).